Reading from the N-terminus, the 591-residue chain is MDASVGENPVAQSIAQAMIEGFNKHYRIFRETSRRAKESFEAAEWQAQIDAVRERVQFYDERVDEAVRRLHEEFDADSLDDSTWQQLKLQYIGILMRHKQPELAETFFNSVCCKILHRTYFNNDYLFARPAVSTEYIESYPPVYSSYYPQDEGLRTTVRRIIEDFDWQRPFANLDRDIDNILRAVHEHIGAWPDMEVNCQIQVLYSAFYRNKTAYIIGKAINGYQEYPFALAVRHNPAGRLEADTILLDPWRISVLFSLSRAYFLVDMEVPSGYVHFLRSIMPNKHRSELYTMLGLGKQGKTMFFRDLIAHLRHSNDQFIIAPGIRGLVMLVFTLPSYPYVFKIIKDVFGASKNMDRATVKRKYLMVKQVDRVGRLADTLEFSYAALPLSRFHPELLDELRALAPSSFEIEGDSVIIKHLYIERRMTPLNIYLEHADDDQVEYAVREYGNAIRELATANIFPGDMLWKNFGVTRYGRVVFYDYDEIEFMTAMNFRRIPPAPYPEMEMAAEPWYSAGPMDVFPEEFATFLLGAPRVRKAFLKHHRDLLDAKFWQDVQASIRKGYLEDFFPYPTELRFCNMWSNERGRAHQAA.

Residues 322–328 (APGIRGL) and Lys-343 contribute to the ATP site. Asp-378 is an active-site residue.

Belongs to the AceK family.

Its subcellular location is the cytoplasm. The catalysed reaction is L-seryl-[isocitrate dehydrogenase] + ATP = O-phospho-L-seryl-[isocitrate dehydrogenase] + ADP + H(+). Its function is as follows. Bifunctional enzyme which can phosphorylate or dephosphorylate isocitrate dehydrogenase (IDH) on a specific serine residue. This is a regulatory mechanism which enables bacteria to bypass the Krebs cycle via the glyoxylate shunt in response to the source of carbon. When bacteria are grown on glucose, IDH is fully active and unphosphorylated, but when grown on acetate or ethanol, the activity of IDH declines drastically concomitant with its phosphorylation. The chain is Isocitrate dehydrogenase kinase/phosphatase from Aromatoleum aromaticum (strain DSM 19018 / LMG 30748 / EbN1) (Azoarcus sp. (strain EbN1)).